A 344-amino-acid chain; its full sequence is Arginase 2, chloroplastic/mitochondrial (344 aa).

The transit peptide at 1 to 26 (MWKIGQRGVPYFQRLIAAPFTTLRSL) directs the protein to the chloroplast and mitochondrion. Positions 163, 187, 189, and 191 each coordinate Mn(2+). Substrate contacts are provided by residues 189–193 (HPDIY), 197–199 (EGN), and Asn-228. Residues Asp-272 and Asp-274 each contribute to the Mn(2+) site. Residue Glu-315 participates in substrate binding.

It belongs to the arginase family. Requires Mn(2+) as cofactor. As to expression, expressed in vasculature of roots, root tips, leaves and cotyledons.

The protein resides in the mitochondrion. The protein localises to the plastid. It is found in the chloroplast. The enzyme catalyses L-arginine + H2O = urea + L-ornithine. The catalysed reaction is agmatine + H2O = urea + putrescine. Its pathway is nitrogen metabolism; urea cycle; L-ornithine and urea from L-arginine: step 1/1. It participates in amine and polyamine biosynthesis; putrescine biosynthesis via agmatine pathway; putrescine from agmatine: step 1/1. Functionally, catalyzes the hydrolysis of L-arginine to urea and L-ornithine. The latter can be utilized in the urea cycle or as a precursor for the synthesis of both polyamines and proline. Possesses agmatinase activity. Catalyzes the formation of putrescine from agmatine. The sequence is that of Arginase 2, chloroplastic/mitochondrial (ARGAH2) from Arabidopsis thaliana (Mouse-ear cress).